The primary structure comprises 410 residues: Serine hydroxymethyltransferase (410 aa).

(6S)-5,6,7,8-tetrahydrofolate-binding positions include Leu-119 and 123 to 125; that span reads GHL. Lys-228 is modified (N6-(pyridoxal phosphate)lysine). Residue 351–353 coordinates (6S)-5,6,7,8-tetrahydrofolate; it reads SPF.

The protein belongs to the SHMT family. As to quaternary structure, homodimer. Pyridoxal 5'-phosphate serves as cofactor.

The protein resides in the cytoplasm. It catalyses the reaction (6R)-5,10-methylene-5,6,7,8-tetrahydrofolate + glycine + H2O = (6S)-5,6,7,8-tetrahydrofolate + L-serine. Its pathway is one-carbon metabolism; tetrahydrofolate interconversion. The protein operates within amino-acid biosynthesis; glycine biosynthesis; glycine from L-serine: step 1/1. In terms of biological role, catalyzes the reversible interconversion of serine and glycine with tetrahydrofolate (THF) serving as the one-carbon carrier. This reaction serves as the major source of one-carbon groups required for the biosynthesis of purines, thymidylate, methionine, and other important biomolecules. Also exhibits THF-independent aldolase activity toward beta-hydroxyamino acids, producing glycine and aldehydes, via a retro-aldol mechanism. This is Serine hydroxymethyltransferase from Clostridium perfringens (strain ATCC 13124 / DSM 756 / JCM 1290 / NCIMB 6125 / NCTC 8237 / Type A).